Here is a 131-residue protein sequence, read N- to C-terminus: UPF0102 protein YraN (131 aa).

Polar residues predominate over residues 1 to 19 (MATVPTRSGSPRQLTTKQT). Residues 1–20 (MATVPTRSGSPRQLTTKQTG) form a disordered region.

The protein belongs to the UPF0102 family.

In Escherichia coli O157:H7, this protein is UPF0102 protein YraN.